The chain runs to 365 residues: tRNA/tmRNA (uracil-C(5))-methyltransferase (365 aa).

Residues Gln189, Tyr217, Asn222, Glu238, and Asp298 each contribute to the S-adenosyl-L-methionine site. Cys323 acts as the Nucleophile in catalysis. The active-site Proton acceptor is Glu357.

Belongs to the class I-like SAM-binding methyltransferase superfamily. RNA M5U methyltransferase family. TrmA subfamily.

It catalyses the reaction uridine(54) in tRNA + S-adenosyl-L-methionine = 5-methyluridine(54) in tRNA + S-adenosyl-L-homocysteine + H(+). It carries out the reaction uridine(341) in tmRNA + S-adenosyl-L-methionine = 5-methyluridine(341) in tmRNA + S-adenosyl-L-homocysteine + H(+). Dual-specificity methyltransferase that catalyzes the formation of 5-methyluridine at position 54 (m5U54) in all tRNAs, and that of position 341 (m5U341) in tmRNA (transfer-mRNA). This chain is tRNA/tmRNA (uracil-C(5))-methyltransferase, found in Shewanella pealeana (strain ATCC 700345 / ANG-SQ1).